The sequence spans 140 residues: Sex-regulated protein janus-B (140 aa).

Arg-42 serves as a coordination point for substrate. His-69 (proton acceptor) is an active-site residue. 110–112 (SRT) lines the substrate pocket.

This sequence belongs to the janus family.

Functionally, janA and janB regulate somatic sex differentiation. The chain is Sex-regulated protein janus-B (janB) from Drosophila sechellia (Fruit fly).